A 323-amino-acid polypeptide reads, in one-letter code: Cyclin-H (323 aa).

Ser5 is subject to Phosphoserine; by CDK8. Residue Ser132 is modified to Phosphoserine. The segment at 297 to 323 is disordered; that stretch reads YEDDDYVSKKSKHEEEEWTDDDLVESL. The segment covering 302 to 311 has biased composition (basic and acidic residues); it reads YVSKKSKHEE. Ser304 is subject to Phosphoserine; by CDK8. A compositionally biased stretch (acidic residues) spans 312–323; that stretch reads EEWTDDDLVESL. Thr315 carries the post-translational modification Phosphothreonine. At Ser322 the chain carries Phosphoserine.

The protein belongs to the cyclin family. Cyclin C subfamily. In terms of assembly, associates primarily with CDK7 and MAT1 to form the CAK complex. CAK can further associate with the core-TFIIH to form the TFIIH basal transcription factor.

It is found in the nucleus. Regulates CDK7, the catalytic subunit of the CDK-activating kinase (CAK) enzymatic complex. CAK activates the cyclin-associated kinases CDK1, CDK2, CDK4 and CDK6 by threonine phosphorylation. CAK complexed to the core-TFIIH basal transcription factor activates RNA polymerase II by serine phosphorylation of the repetitive C-terminal domain (CTD) of its large subunit (POLR2A), allowing its escape from the promoter and elongation of the transcripts. Involved in cell cycle control and in RNA transcription by RNA polymerase II. Its expression and activity are constant throughout the cell cycle. This chain is Cyclin-H (CCNH), found in Homo sapiens (Human).